The sequence spans 140 residues: Gonadotropin subunit beta-2 (140 aa).

An N-terminal signal peptide occupies residues 1-23 (MGTPVKILVVLFSVIVLLAVAQS). 6 cysteine pairs are disulfide-bonded: cysteine 29/cysteine 77, cysteine 43/cysteine 92, cysteine 46/cysteine 130, cysteine 54/cysteine 108, cysteine 58/cysteine 110, and cysteine 113/cysteine 120. The N-linked (GlcNAc...) asparagine glycan is linked to asparagine 33.

Belongs to the glycoprotein hormones subunit beta family. As to quaternary structure, heterodimer of an alpha and a beta chain.

Its subcellular location is the secreted. Its function is as follows. Involved in gametogenesis and steroidogenesis. The sequence is that of Gonadotropin subunit beta-2 (cgbb) from Carassius auratus (Goldfish).